The sequence spans 332 residues: Glycerol-3-phosphate dehydrogenase [NAD(P)+] (332 aa).

Serine 11, phenylalanine 12, arginine 32, and lysine 106 together coordinate NADPH. Sn-glycerol 3-phosphate-binding residues include lysine 106, glycine 134, and serine 136. An NADPH-binding site is contributed by alanine 138. Sn-glycerol 3-phosphate contacts are provided by lysine 189, aspartate 242, serine 252, arginine 253, and asparagine 254. Lysine 189 serves as the catalytic Proton acceptor. An NADPH-binding site is contributed by arginine 253. NADPH is bound by residues valine 277 and glutamate 279.

The protein belongs to the NAD-dependent glycerol-3-phosphate dehydrogenase family.

Its subcellular location is the cytoplasm. The catalysed reaction is sn-glycerol 3-phosphate + NAD(+) = dihydroxyacetone phosphate + NADH + H(+). The enzyme catalyses sn-glycerol 3-phosphate + NADP(+) = dihydroxyacetone phosphate + NADPH + H(+). Its pathway is membrane lipid metabolism; glycerophospholipid metabolism. In terms of biological role, catalyzes the reduction of the glycolytic intermediate dihydroxyacetone phosphate (DHAP) to sn-glycerol 3-phosphate (G3P), the key precursor for phospholipid synthesis. The protein is Glycerol-3-phosphate dehydrogenase [NAD(P)+] of Clostridium acetobutylicum (strain ATCC 824 / DSM 792 / JCM 1419 / IAM 19013 / LMG 5710 / NBRC 13948 / NRRL B-527 / VKM B-1787 / 2291 / W).